Consider the following 196-residue polypeptide: Ribonuclease HII (196 aa).

An RNase H type-2 domain is found at 15–196; the sequence is YIVAGIDEAG…RKSFRYSCFI (182 aa). D21, E22, and D112 together coordinate a divalent metal cation.

The protein belongs to the RNase HII family. It depends on Mn(2+) as a cofactor. Requires Mg(2+) as cofactor.

Its subcellular location is the cytoplasm. The catalysed reaction is Endonucleolytic cleavage to 5'-phosphomonoester.. Endonuclease that specifically degrades the RNA of RNA-DNA hybrids. The sequence is that of Ribonuclease HII from Rickettsia canadensis (strain McKiel).